We begin with the raw amino-acid sequence, 292 residues long: 4-hydroxy-tetrahydrodipicolinate synthase (292 aa).

T45 contacts pyruvate. Y133 acts as the Proton donor/acceptor in catalysis. K161 (schiff-base intermediate with substrate) is an active-site residue. I203 is a pyruvate binding site.

Belongs to the DapA family. Homotetramer; dimer of dimers.

The protein localises to the cytoplasm. The catalysed reaction is L-aspartate 4-semialdehyde + pyruvate = (2S,4S)-4-hydroxy-2,3,4,5-tetrahydrodipicolinate + H2O + H(+). It participates in amino-acid biosynthesis; L-lysine biosynthesis via DAP pathway; (S)-tetrahydrodipicolinate from L-aspartate: step 3/4. Functionally, catalyzes the condensation of (S)-aspartate-beta-semialdehyde [(S)-ASA] and pyruvate to 4-hydroxy-tetrahydrodipicolinate (HTPA). The sequence is that of 4-hydroxy-tetrahydrodipicolinate synthase from Salmonella paratyphi A (strain AKU_12601).